A 216-amino-acid polypeptide reads, in one-letter code: MRVILLGAPGAGKGTQAKFITEKFGIPQISTGDMLRAAVKAGTELGIKAKSIMDAGGLVSDDLIIALVKDRIAQADCAKGFLFDGFPRTIPQAEALVTAGVELDAVVEIAVEDEEIVQRIAGRRVHEASGRVYHIVYNPPKIAGKDDITGEELVQRKDDTEETVRHRLSVYHSQTKPLVEFYQNLSAKNGGKPKYSHIPGVGSVEAITAKVLEALS.

10–15 (GAGKGT) provides a ligand contact to ATP. An NMP region spans residues 30 to 59 (STGDMLRAAVKAGTELGIKAKSIMDAGGLV). AMP-binding positions include Thr31, Arg36, 57–59 (GLV), 85–88 (GFPR), and Gln92. The interval 122-159 (GRRVHEASGRVYHIVYNPPKIAGKDDITGEELVQRKDD) is LID. ATP contacts are provided by residues Arg123 and 132–133 (VY). 2 residues coordinate AMP: Arg156 and Arg167. Position 202 (Gly202) interacts with ATP.

It belongs to the adenylate kinase family. As to quaternary structure, monomer.

The protein resides in the cytoplasm. The enzyme catalyses AMP + ATP = 2 ADP. The protein operates within purine metabolism; AMP biosynthesis via salvage pathway; AMP from ADP: step 1/1. Its function is as follows. Catalyzes the reversible transfer of the terminal phosphate group between ATP and AMP. Plays an important role in cellular energy homeostasis and in adenine nucleotide metabolism. In Pseudomonas fluorescens (strain Pf0-1), this protein is Adenylate kinase.